A 243-amino-acid polypeptide reads, in one-letter code: Uba3-binding protein but1 (243 aa).

Positions 28-50 (KSTKKRRSSTKDEETRGMHPHIK) are disordered.

Homodimer. Interacts with but2 and uba3.

The protein resides in the nucleus. Its function is as follows. Acts as a negative regulator of the NEDD8 pathway. Has a role in meiosis. This chain is Uba3-binding protein but1 (but1), found in Schizosaccharomyces pombe (strain 972 / ATCC 24843) (Fission yeast).